Consider the following 219-residue polypeptide: Proteasome subunit beta type-9 (219 aa).

Positions 1 to 20 (MLRAGAPTGDLPRAGEVHTG) are cleaved as a propeptide — removed in mature form. Catalysis depends on Thr-21, which acts as the Nucleophile. An N6-acetyllysine mark is found at Lys-53 and Lys-109.

This sequence belongs to the peptidase T1B family. In terms of assembly, the 26S proteasome consists of a 20S proteasome core and two 19S regulatory subunits. The 20S proteasome core is composed of 28 subunits that are arranged in four stacked rings, resulting in a barrel-shaped structure. The two end rings are each formed by seven alpha subunits, and the two central rings are each formed by seven beta subunits. The catalytic chamber with the active sites is on the inside of the barrel. Component of the immunoproteasome, where it displaces the equivalent housekeeping subunit PSMB6. Component of the spermatoproteasome, a form of the proteasome specifically found in testis. (Microbial infection) Interacts with HIV-1 TAT protein. Post-translationally, autocleaved. The resulting N-terminal Thr residue of the mature subunit is responsible for the nucleophile proteolytic activity.

The protein resides in the cytoplasm. Its subcellular location is the nucleus. The enzyme catalyses Cleavage of peptide bonds with very broad specificity.. Functionally, the proteasome is a multicatalytic proteinase complex which is characterized by its ability to cleave peptides with Arg, Phe, Tyr, Leu, and Glu adjacent to the leaving group at neutral or slightly basic pH. The proteasome has an ATP-dependent proteolytic activity. This subunit is involved in antigen processing to generate class I binding peptides. Replacement of PSMB6 by PSMB9 increases the capacity of the immunoproteasome to cleave model peptides after hydrophobic and basic residues. This Homo sapiens (Human) protein is Proteasome subunit beta type-9 (PSMB9).